The chain runs to 247 residues: 2,3-bisphosphoglycerate-dependent phosphoglycerate mutase (247 aa).

Substrate-binding positions include 8–15, 21–22, arginine 60, 87–90, lysine 98, 114–115, and 183–184; these read RHGESQWN, TG, ERHY, RR, and GN. Catalysis depends on histidine 9, which acts as the Tele-phosphohistidine intermediate. The Proton donor/acceptor role is filled by glutamate 87.

The protein belongs to the phosphoglycerate mutase family. BPG-dependent PGAM subfamily.

It catalyses the reaction (2R)-2-phosphoglycerate = (2R)-3-phosphoglycerate. Its pathway is carbohydrate degradation; glycolysis; pyruvate from D-glyceraldehyde 3-phosphate: step 3/5. Its function is as follows. Catalyzes the interconversion of 2-phosphoglycerate and 3-phosphoglycerate. This chain is 2,3-bisphosphoglycerate-dependent phosphoglycerate mutase, found in Chlorobium phaeovibrioides (strain DSM 265 / 1930) (Prosthecochloris vibrioformis (strain DSM 265)).